Here is a 255-residue protein sequence, read N- to C-terminus: tRNA (guanine-N(1)-)-methyltransferase (255 aa).

Residues Gly-119 and 139-144 contribute to the S-adenosyl-L-methionine site; that span reads IGDFIL.

Belongs to the RNA methyltransferase TrmD family. In terms of assembly, homodimer.

The protein localises to the cytoplasm. The catalysed reaction is guanosine(37) in tRNA + S-adenosyl-L-methionine = N(1)-methylguanosine(37) in tRNA + S-adenosyl-L-homocysteine + H(+). Specifically methylates guanosine-37 in various tRNAs. The protein is tRNA (guanine-N(1)-)-methyltransferase of Pseudoalteromonas translucida (strain TAC 125).